Consider the following 335-residue polypeptide: Cell division protein ZipA (335 aa).

Over 1–6 (MENLQL) the chain is Periplasmic. A helical membrane pass occupies residues 7–27 (VLFVLGAVAIIAVLVHGFWSI). Topologically, residues 28–335 (RRQQPKSLKE…SYLQRIRAQM (308 aa)) are cytoplasmic. Disordered regions lie at residues 37 to 128 (ESPM…NEEV) and 163 to 185 (RPAP…VSVE). Positions 170–185 (APQSVAPASVEPVSVE) are enriched in low complexity.

The protein belongs to the ZipA family. As to quaternary structure, interacts with FtsZ via their C-terminal domains.

It localises to the cell inner membrane. Functionally, essential cell division protein that stabilizes the FtsZ protofilaments by cross-linking them and that serves as a cytoplasmic membrane anchor for the Z ring. Also required for the recruitment to the septal ring of downstream cell division proteins. The chain is Cell division protein ZipA from Shewanella loihica (strain ATCC BAA-1088 / PV-4).